The primary structure comprises 490 residues: Aspartyl/glutamyl-tRNA(Asn/Gln) amidotransferase subunit B (490 aa).

Belongs to the GatB/GatE family. GatB subfamily. Heterotrimer of A, B and C subunits.

It carries out the reaction L-glutamyl-tRNA(Gln) + L-glutamine + ATP + H2O = L-glutaminyl-tRNA(Gln) + L-glutamate + ADP + phosphate + H(+). The catalysed reaction is L-aspartyl-tRNA(Asn) + L-glutamine + ATP + H2O = L-asparaginyl-tRNA(Asn) + L-glutamate + ADP + phosphate + 2 H(+). Allows the formation of correctly charged Asn-tRNA(Asn) or Gln-tRNA(Gln) through the transamidation of misacylated Asp-tRNA(Asn) or Glu-tRNA(Gln) in organisms which lack either or both of asparaginyl-tRNA or glutaminyl-tRNA synthetases. The reaction takes place in the presence of glutamine and ATP through an activated phospho-Asp-tRNA(Asn) or phospho-Glu-tRNA(Gln). This is Aspartyl/glutamyl-tRNA(Asn/Gln) amidotransferase subunit B from Methylobacterium sp. (strain 4-46).